The chain runs to 440 residues: Transposon Ty1-NL2 Gag polyprotein (440 aa).

Polar residues-rich tracts occupy residues 1-23 (MESQQLSQHSPISHGSACASVTS), 48-60 (TKANSQQTTTPAS), 71-97 (SPQTAQSHSPQNGPYPQQCMMTQNQAN), and 129-152 (QFPQYPSSVGTPLSTPSPESGNTF). Disordered regions lie at residues 1–97 (MESQ…NQAN), 129–171 (QFPQ…YVRP), and 352–440 (GSRN…PETY). Positions 153 to 165 (TDSSSADSDMTST) are enriched in low complexity. Positions 299 to 401 (NNGIHINNKV…NSKSKTARAH (103 aa)) are RNA-binding. Low complexity predominate over residues 402 to 418 (NVSTSNNSPSTDNDSIS). Serine 416 bears the Phosphoserine mark. Positions 419-428 (KSTTEPIQLN) are enriched in polar residues. Positions 429–440 (NKHDLHLRPETY) are enriched in basic and acidic residues.

In terms of assembly, homotrimer.

It is found in the cytoplasm. Functionally, capsid protein (CA) is the structural component of the virus-like particle (VLP), forming the shell that encapsulates the retrotransposons dimeric RNA genome. The particles are assembled from trimer-clustered units and there are holes in the capsid shells that allow for the diffusion of macromolecules. CA also has nucleocapsid-like chaperone activity, promoting primer tRNA(i)-Met annealing to the multipartite primer-binding site (PBS), dimerization of Ty1 RNA and initiation of reverse transcription. In Saccharomyces cerevisiae (strain ATCC 204508 / S288c) (Baker's yeast), this protein is Transposon Ty1-NL2 Gag polyprotein (TY1A-NL2).